A 114-amino-acid chain; its full sequence is Putative neurotoxin 7 (114 aa).

Belongs to the scolopendra neurotoxin 8 family. Contains 3 disulfide bonds. Expressed by the venom gland.

The protein localises to the secreted. The polypeptide is Putative neurotoxin 7 (Scolopendra mutilans (Chinese red-headed centipede)).